Here is a 393-residue protein sequence, read N- to C-terminus: NAD(P)H-quinone oxidoreductase subunit H, chloroplastic (393 aa).

It belongs to the complex I 49 kDa subunit family. As to quaternary structure, NDH is composed of at least 16 different subunits, 5 of which are encoded in the nucleus.

Its subcellular location is the plastid. The protein localises to the chloroplast thylakoid membrane. The enzyme catalyses a plastoquinone + NADH + (n+1) H(+)(in) = a plastoquinol + NAD(+) + n H(+)(out). The catalysed reaction is a plastoquinone + NADPH + (n+1) H(+)(in) = a plastoquinol + NADP(+) + n H(+)(out). Functionally, NDH shuttles electrons from NAD(P)H:plastoquinone, via FMN and iron-sulfur (Fe-S) centers, to quinones in the photosynthetic chain and possibly in a chloroplast respiratory chain. The immediate electron acceptor for the enzyme in this species is believed to be plastoquinone. Couples the redox reaction to proton translocation, and thus conserves the redox energy in a proton gradient. In Hordeum vulgare (Barley), this protein is NAD(P)H-quinone oxidoreductase subunit H, chloroplastic.